A 1174-amino-acid chain; its full sequence is MENNIQNQCVPYNCLNNPEVEILNEERSTGRLPLDISLSLTRFLLSEFVPGVGVAFGLFDLIWGFITPSDWSLFLLQIEQLIEQRIETLERNRAITTLRGLADSYEIYIEALREWEANPNNAQLREDVRIRFANTDDALITAINNFTLTSFEIPLLSVYVQAANLHLSLLRDAVSFGQGWGLDIATVNNHYNRLINLIHRYTKHCLDTYNQGLENLRGTNTRQWARFNQFRRDLTLTVLDIVALFPNYDVRTYPIQTSSQLTREIYTSSVIEDSPVSANIPNGFNRAEFGVRPPHLMDFMNSLFVTAETVRSQTVWGGHLVSSRNTAGNRINFPSYGVFNPGGAIWIADEDPRPFYRTLSDPVFVRGGFGNPHYVLGLRGVAFQQTGTNHTRTFRNSGTIDSLDEIPPQDNSGAPWNDYSHVLNHVTFVRWPGEISGSDSWRAPMFSWTHRSATPTNTIDPERITQIPLVKAHTLQSGTTVVRGPGFTGGDILRRTSGGPFAYTIVNINGQLPQRYRARIRYASTTNLRIYVTVAGERIFAGQFNKTMDTGDPLTFQSFSYATINTAFTFPMSQSSFTVGADTFSSGNEVYIDRFELIPVTATFEAEYDLERAQKAVNALFTSINQIGIKTDVTDYHIDQVSNLVDCLSDEFCLDEKRELSEKVKHAKRLSDERNLLQDPNFKGINRQLDRGWRGSTDITIQRGDDVFKENYVTLPGTFDECYPTYLYQKIDESKLKPYTRYQLRGYIEDSQDLEIYLIRYNAKHETVNVLGTGSLWPLSVQSPIRKCGEPNRCAPHLEWNPDLDCSCRDGEKCAHHSHHFSLDIDVGCTDLNEDLDVWVIFKIKTQDGHARLGNLEFLEEKPLVGEALARVKRAEKKWRDKREKLELETNIVYKEAKESVDALFVNSQYDQLQADTNIAMIHAADKRVHRIREAYLPELSVIPGVNVDIFEELKGRIFTAFFLYDARNVIKNGDFNNGLSCWNVKGHVDVEEQNNHRSVLVVPEWEAEVSQEVRVCPGRGYILRVTAYKEGYGEGCVTIHEIENNTDELKFSNCVEEEVYPNNTVTCNDYTANQEEYGGAYTSRNRGYDETYGSNSSVPADYASVYEEKSYTDGRRDNPCESNRGYGDYTPLPAGYVTKELEYFPETDKVWIEIGETEGTFIVDSVELLLMEE.

It belongs to the delta endotoxin family.

Its function is as follows. Promotes colloidosmotic lysis by binding to the midgut epithelial cells of many lepidopteran larvae. The polypeptide is Pesticidal crystal protein Cry1Fa (cry1Fa) (Bacillus thuringiensis subsp. aizawai).